Consider the following 155-residue polypeptide: Endoribonuclease YbeY (155 aa).

Zn(2+) is bound by residues H117, H121, and H127.

Belongs to the endoribonuclease YbeY family. Requires Zn(2+) as cofactor.

Its subcellular location is the cytoplasm. In terms of biological role, single strand-specific metallo-endoribonuclease involved in late-stage 70S ribosome quality control and in maturation of the 3' terminus of the 16S rRNA. This is Endoribonuclease YbeY from Treponema denticola (strain ATCC 35405 / DSM 14222 / CIP 103919 / JCM 8153 / KCTC 15104).